An 83-amino-acid polypeptide reads, in one-letter code: Small ribosomal subunit protein bS16 (83 aa).

Belongs to the bacterial ribosomal protein bS16 family.

This Pseudomonas putida (strain W619) protein is Small ribosomal subunit protein bS16.